The chain runs to 241 residues: Uridylate kinase (241 aa).

14 to 17 (KLSG) provides a ligand contact to ATP. Glycine 56 provides a ligand contact to UMP. ATP-binding residues include glycine 57 and arginine 61. UMP contacts are provided by residues aspartate 77 and 138–145 (TGNPFFTT). ATP-binding residues include threonine 165, tyrosine 171, and aspartate 174.

Belongs to the UMP kinase family. Homohexamer.

The protein resides in the cytoplasm. It catalyses the reaction UMP + ATP = UDP + ADP. It participates in pyrimidine metabolism; CTP biosynthesis via de novo pathway; UDP from UMP (UMPK route): step 1/1. Inhibited by UTP. Its function is as follows. Catalyzes the reversible phosphorylation of UMP to UDP. This chain is Uridylate kinase, found in Psychrobacter cryohalolentis (strain ATCC BAA-1226 / DSM 17306 / VKM B-2378 / K5).